Here is a 197-residue protein sequence, read N- to C-terminus: Elongation factor Ts (197 aa).

Positions 81–84 (TDFV) are involved in Mg(2+) ion dislocation from EF-Tu.

This sequence belongs to the EF-Ts family.

The protein localises to the cytoplasm. In terms of biological role, associates with the EF-Tu.GDP complex and induces the exchange of GDP to GTP. It remains bound to the aminoacyl-tRNA.EF-Tu.GTP complex up to the GTP hydrolysis stage on the ribosome. This Fervidobacterium nodosum (strain ATCC 35602 / DSM 5306 / Rt17-B1) protein is Elongation factor Ts.